An 88-amino-acid polypeptide reads, in one-letter code: MDTDTDTDTDTDTDTDTDTDVTNVEDIINEIDREKEEILKNVEIENNKNINKNHPSGYIREALVINTSSNSDSIDKEVIECISHDVGI.

Residues 1–19 show a composition bias toward acidic residues; that stretch reads MDTDTDTDTDTDTDTDTDT. A disordered region spans residues 1-22; sequence MDTDTDTDTDTDTDTDTDTDVT. 9 tandem repeats follow at residues 2–3, 4–5, 6–7, 8–9, 10–11, 12–13, 14–15, 16–17, and 18–19. The interval 2 to 19 is 9 X 2 AA tandem repeats of D-T; the sequence is DTDTDTDTDTDTDTDTDT.

This sequence belongs to the orthopoxvirus OPG197 family.

The protein is Protein OPG197 (OPG197) of Vaccinia virus (strain Copenhagen) (VACV).